The primary structure comprises 465 residues: Cytochrome P450 85A2 (465 aa).

A helical membrane pass occupies residues 2-22; the sequence is GIMMMILGLLVIIVCLCTALL. C415 contributes to the heme binding site. Residue C462 is the site of S-farnesyl cysteine attachment. A Farnesylation CAAX motif motif is present at residues 462–465; sequence CSPY.

This sequence belongs to the cytochrome P450 family. The cofactor is heme. In terms of processing, isoprenylated (farnesylated); this addition of a 15-carbon farnesyl isoprenoid to the carboxy terminus is required for endoplasmic reticulum localization and essential for the biosynthesis of brassinolide. In terms of tissue distribution, expressed in stems, hypocotyls, leaves, siliques, shoots, and roots, with a higher expression in apical shoots.

It is found in the membrane. The protein resides in the endoplasmic reticulum. It carries out the reaction 6-deoxoteasterone + reduced [NADPH--hemoprotein reductase] + O2 = 6alpha-hydroxyteasterone + oxidized [NADPH--hemoprotein reductase] + H2O + H(+). The catalysed reaction is 6alpha-hydroxytyphasterol + reduced [NADPH--hemoprotein reductase] + O2 = teasterone + oxidized [NADPH--hemoprotein reductase] + 2 H2O + H(+). The enzyme catalyses 3-dehydro-6-deoxoteasterone + reduced [NADPH--hemoprotein reductase] + O2 = 3-dehydro-6alpha-hydroxyteasterone + oxidized [NADPH--hemoprotein reductase] + H2O + H(+). It catalyses the reaction 3-dehydro-6alpha-hydroxyteasterone + reduced [NADPH--hemoprotein reductase] + O2 = 3-dehydroteasterone + oxidized [NADPH--hemoprotein reductase] + 2 H2O + H(+). It carries out the reaction 6-deoxotyphasterol + reduced [NADPH--hemoprotein reductase] + O2 = 6alpha-hydroxytyphasterol + oxidized [NADPH--hemoprotein reductase] + H2O + H(+). The catalysed reaction is 6alpha-hydroxytyphasterol + reduced [NADPH--hemoprotein reductase] + O2 = typhasterol + oxidized [NADPH--hemoprotein reductase] + 2 H2O + H(+). The enzyme catalyses 6-deoxocastasterone + reduced [NADPH--hemoprotein reductase] + O2 = 6alpha-hydroxycastasterone + oxidized [NADPH--hemoprotein reductase] + H2O + H(+). It catalyses the reaction 6alpha-hydroxycastasterone + reduced [NADPH--hemoprotein reductase] + O2 = castasterone + oxidized [NADPH--hemoprotein reductase] + 2 H2O + H(+). It carries out the reaction 6-deoxo-28-norteasterone + 2 reduced [NADPH--hemoprotein reductase] + 2 O2 = 28-norteasterone + 2 oxidized [NADPH--hemoprotein reductase] + 3 H2O + 2 H(+). The catalysed reaction is 6-deoxo-28-norteasterone + reduced [NADPH--hemoprotein reductase] + O2 = 6alpha-hydroxy-28-norteasterone + oxidized [NADPH--hemoprotein reductase] + H2O + H(+). The enzyme catalyses 6alpha-hydroxy-28-norteasterone + reduced [NADPH--hemoprotein reductase] + O2 = 28-norteasterone + oxidized [NADPH--hemoprotein reductase] + 2 H2O + H(+). It catalyses the reaction 6-deoxo-28-nortyphasterol + 2 reduced [NADPH--hemoprotein reductase] + 2 O2 = 28-nortyphasterol + 2 oxidized [NADPH--hemoprotein reductase] + 3 H2O + 2 H(+). It carries out the reaction 6-deoxo-28-nortyphasterol + reduced [NADPH--hemoprotein reductase] + O2 = 6alpha-hydroxy-28-nortyphasterol + oxidized [NADPH--hemoprotein reductase] + H2O + H(+). The catalysed reaction is 6alpha-hydroxy-28-nortyphasterol + reduced [NADPH--hemoprotein reductase] + O2 = 28-nortyphasterol + oxidized [NADPH--hemoprotein reductase] + 2 H2O + H(+). The enzyme catalyses 6-deoxo-28-norcastasterone + 2 reduced [NADPH--hemoprotein reductase] + 2 O2 = 28-norcastasterone + 2 oxidized [NADPH--hemoprotein reductase] + 3 H2O + 2 H(+). It catalyses the reaction 6-deoxo-28-norcastasterone + reduced [NADPH--hemoprotein reductase] + O2 = 6alpha-hydroxy-28-norcastasterone + oxidized [NADPH--hemoprotein reductase] + H2O + H(+). It carries out the reaction 6alpha-hydroxy-28-norcastasterone + reduced [NADPH--hemoprotein reductase] + O2 = 28-norcastasterone + oxidized [NADPH--hemoprotein reductase] + 2 H2O + H(+). The catalysed reaction is 3-dehydro-6-deoxo-28-norteasterone + 2 reduced [NADPH--hemoprotein reductase] + 2 O2 = 6-dehydro-28-norteasterone + 2 oxidized [NADPH--hemoprotein reductase] + 3 H2O + 2 H(+). The enzyme catalyses 3-dehydro-6-deoxo-28-norteasterone + reduced [NADPH--hemoprotein reductase] + O2 = 3-dehydro-6alpha-hydroxy-28-norteasterone + oxidized [NADPH--hemoprotein reductase] + H2O + H(+). It catalyses the reaction 3-dehydro-6alpha-hydroxy-28-norteasterone + reduced [NADPH--hemoprotein reductase] + O2 = 6-dehydro-28-norteasterone + oxidized [NADPH--hemoprotein reductase] + 2 H2O + H(+). It carries out the reaction teasterone + reduced [NADPH--hemoprotein reductase] + O2 = 7-oxateasterone + oxidized [NADPH--hemoprotein reductase] + H2O + H(+). The catalysed reaction is castasterone + reduced [NADPH--hemoprotein reductase] + O2 = brassinolide + oxidized [NADPH--hemoprotein reductase] + H2O + H(+). The enzyme catalyses typhasterol + reduced [NADPH--hemoprotein reductase] + O2 = 7-oxatyphasterol + oxidized [NADPH--hemoprotein reductase] + H2O + H(+). It catalyses the reaction 6-deoxocastasterone + 2 reduced [NADPH--hemoprotein reductase] + 2 O2 = castasterone + 2 oxidized [NADPH--hemoprotein reductase] + 3 H2O + 2 H(+). It carries out the reaction 6-deoxoteasterone + 2 reduced [NADPH--hemoprotein reductase] + 2 O2 = teasterone + 2 oxidized [NADPH--hemoprotein reductase] + 3 H2O + 2 H(+). The catalysed reaction is 6-deoxotyphasterol + 2 reduced [NADPH--hemoprotein reductase] + 2 O2 = typhasterol + 2 oxidized [NADPH--hemoprotein reductase] + 3 H2O + 2 H(+). The enzyme catalyses 3-dehydro-6-deoxoteasterone + 2 reduced [NADPH--hemoprotein reductase] + 2 O2 = 3-dehydroteasterone + 2 oxidized [NADPH--hemoprotein reductase] + 3 H2O + 2 H(+). It participates in plant hormone biosynthesis; brassinosteroid biosynthesis. In terms of biological role, mediates Baeyer-Villiger oxidation and catalyzes the C6-oxidation step and lactonization in brassinosteroids biosynthesis. Converts 6-deoxocastasterone (6-deoxoCS) to castasterone (CS), and castasterone to brassinolide (BL). May also convert 6-deoxoteasterone (6-deoxoTE) to teasterone (TE), 3-dehydro-6-deoxoteasterone (6-deoxo3DT, 6-deoxo-3-DHT) to 3-dehydroteasterone (3DT, 3-DHT), and 6-deoxotyphasterol (6-deoxoTY) to typhasterol (TY). Also seems to be able to convert teasterone (TE) and typhasterol (TY) to 7-oxateasterone (7-OXTE) and 7-oxatyphasterol (7-OXTY), respectively. Catalyzes the conversion of 6-deoxo-28-norteasterone (6-deoxo-28-norTE) to 28-norteasterone (28-norTE), 6-deoxo-28-nordeoxoteasterone (6-deoxo-28-nor-3-DHT) to 28-nordeoxoteasterone (28-nor-3-DHT), 6-deoxo-28-nortyphasterol (6-deoxo-28-norTY) to 28-nortyphasterol (28-norTY) and 6-deoxo-28-norcastasterone (6-deoxo-28-norCS) to 28-norcastasterone (28-norCS). Involved in a negative regulation of responses to abscisic acid (ABA) and drought tolerance. The polypeptide is Cytochrome P450 85A2 (CYP85A2) (Arabidopsis thaliana (Mouse-ear cress)).